The primary structure comprises 330 residues: Aspartate--ammonia ligase (330 aa).

It belongs to the class-II aminoacyl-tRNA synthetase family. AsnA subfamily.

The protein resides in the cytoplasm. The enzyme catalyses L-aspartate + NH4(+) + ATP = L-asparagine + AMP + diphosphate + H(+). The protein operates within amino-acid biosynthesis; L-asparagine biosynthesis; L-asparagine from L-aspartate (ammonia route): step 1/1. In Yersinia enterocolitica serotype O:8 / biotype 1B (strain NCTC 13174 / 8081), this protein is Aspartate--ammonia ligase.